The following is a 716-amino-acid chain: Probable glutamate--tRNA ligase, cytoplasmic (716 aa).

The residue at position 190 (serine 190) is a Phosphoserine. 210–212 (RFP) provides a ligand contact to L-glutamate. A 'HIGH' region motif is present at residues 215–224 (PSGYLHIGHA). Histidine 220 contacts ATP. Residues aspartate 246, 386-390 (YDFAC), and arginine 404 contribute to the L-glutamate site. Residues glutamate 407 and 441 to 445 (LLSKR) each bind ATP. Positions 441–445 (LLSKR) match the 'KMSKS' region motif.

The protein belongs to the class-I aminoacyl-tRNA synthetase family. Glutamate--tRNA ligase type 2 subfamily. In terms of assembly, component of a yeast aminoacyl-tRNA synthase (aaRS) complex formed by methionyl-tRNA synthase, glutamyl-tRNA synthase and the tRNA aminoacylation cofactor arc1 in a stoichiometric complex. Interacts with arc1/SPAC30C2.04.

The protein localises to the cytoplasm. It is found in the nucleus. It carries out the reaction tRNA(Glu) + L-glutamate + ATP = L-glutamyl-tRNA(Glu) + AMP + diphosphate. Its function is as follows. Catalyzes the attachment of glutamate to tRNA(Glu) in a two-step reaction: glutamate is first activated by ATP to form Glu-AMP and then transferred to the acceptor end of tRNA(Glu). In Schizosaccharomyces pombe (strain 972 / ATCC 24843) (Fission yeast), this protein is Probable glutamate--tRNA ligase, cytoplasmic (gus1).